The sequence spans 272 residues: Shikimate dehydrogenase (NADP(+)) (272 aa).

Residues 14-16 (SKS) and threonine 61 each bind shikimate. The active-site Proton acceptor is the lysine 65. Glutamate 77 serves as a coordination point for NADP(+). Residues asparagine 86 and aspartate 102 each contribute to the shikimate site. NADP(+) is bound by residues 126-130 (GAGGA), 149-154 (NRTVSR), and methionine 213. Tyrosine 215 contributes to the shikimate binding site. An NADP(+)-binding site is contributed by glycine 237.

Belongs to the shikimate dehydrogenase family. In terms of assembly, homodimer.

The catalysed reaction is shikimate + NADP(+) = 3-dehydroshikimate + NADPH + H(+). It functions in the pathway metabolic intermediate biosynthesis; chorismate biosynthesis; chorismate from D-erythrose 4-phosphate and phosphoenolpyruvate: step 4/7. Its function is as follows. Involved in the biosynthesis of the chorismate, which leads to the biosynthesis of aromatic amino acids. Catalyzes the reversible NADPH linked reduction of 3-dehydroshikimate (DHSA) to yield shikimate (SA). The polypeptide is Shikimate dehydrogenase (NADP(+)) (Shigella flexneri).